Consider the following 1516-residue polypeptide: Alpha-2-macroglobulin homolog (1516 aa).

Residues M1–A26 form the signal peptide.

This sequence belongs to the protease inhibitor I39 (alpha-2-macroglobulin) family. Bacterial alpha-2-macroglobulin subfamily.

The protein is Alpha-2-macroglobulin homolog of Pseudomonas aeruginosa (strain ATCC 15692 / DSM 22644 / CIP 104116 / JCM 14847 / LMG 12228 / 1C / PRS 101 / PAO1).